The chain runs to 599 residues: Bile salt-activated lipase (599 aa).

The signal sequence occupies residues 1 to 20 (MGRLEVLFLGLTCCLAAACA). Cys-84 and Cys-100 form a disulfide bridge. N-linked (GlcNAc...) asparagine glycosylation occurs at Asn-207. Catalysis depends on Ser-214, which acts as the Acyl-ester intermediate. Cys-266 and Cys-277 are oxidised to a cystine. N-linked (GlcNAc...) asparagine glycosylation occurs at Asn-325. Catalysis depends on charge relay system residues Asp-340 and His-455. A disordered region spans residues 553–599 (TGDQDTLTPPEDDSEVAPDPPSDDSQVVPVPPTDDSVEAQMPATIGF). Repeat copies occupy residues 559 to 569 (LTPPEDDSEVA), 570 to 580 (PDPPSDDSQVV), and 581 to 588 (PVPPTDDS). The segment at 559–588 (LTPPEDDSEVAPDPPSDDSQVVPVPPTDDS) is 4 X 11 AA tandem repeats, O-glycosylated region.

It belongs to the type-B carboxylesterase/lipase family. As to quaternary structure, interacts with CLC. As to expression, EXpressed by eosinophils.

It localises to the secreted. The enzyme catalyses a triacylglycerol + H2O = a diacylglycerol + a fatty acid + H(+). It catalyses the reaction 1,2,3-tri-(9Z-octadecenoyl)-glycerol + H2O = di-(9Z)-octadecenoylglycerol + (9Z)-octadecenoate + H(+). The catalysed reaction is 1,2,3-trioctanoylglycerol + H2O = dioctanoylglycerol + octanoate + H(+). It carries out the reaction a sterol ester + H2O = a sterol + a fatty acid + H(+). The enzyme catalyses an acetyl ester + H2O = an aliphatic alcohol + acetate + H(+). It catalyses the reaction a butanoate ester + H2O = an aliphatic alcohol + butanoate + H(+). The catalysed reaction is 9-hexadecanoyloxy-octadecanoate + H2O = 9-hydroxy-octadecanoate + hexadecanoate + H(+). It carries out the reaction 9-(9Z-octadecenoyloxy)-octadecanoate + H2O = 9-hydroxy-octadecanoate + (9Z)-octadecenoate + H(+). The enzyme catalyses cholesteryl (9Z-octadecenoate) + H2O = cholesterol + (9Z)-octadecenoate + H(+). It catalyses the reaction 1-hexadecanoyl-sn-glycero-3-phosphocholine + H2O = sn-glycerol 3-phosphocholine + hexadecanoate + H(+). The catalysed reaction is 12-hexadecanoyloxy-octadecanoate + H2O = 12-hydroxyoctadecanoate + hexadecanoate + H(+). It carries out the reaction 12-(9Z-octadecenoyloxy)-octadecanoate + H2O = 12-hydroxyoctadecanoate + (9Z)-octadecenoate + H(+). The enzyme catalyses 13-(9Z-octadecenoyloxy)-octadecanoate + H2O = 13-hydroxy-octadecanoate + (9Z)-octadecenoate + H(+). It catalyses the reaction 9-(9Z-hexadecenoyloxy)-octadecanoate + H2O = (9Z)-hexadecenoate + 9-hydroxy-octadecanoate + H(+). The catalysed reaction is 12-(9Z-hexadecenoyloxy)-octadecanoate + H2O = 12-hydroxyoctadecanoate + (9Z)-hexadecenoate + H(+). It carries out the reaction 13-(9Z-hexadecenoyloxy)-octadecanoate + H2O = 13-hydroxy-octadecanoate + (9Z)-hexadecenoate + H(+). The enzyme catalyses 12-octadecanoyloxy-octadecanoate + H2O = 12-hydroxyoctadecanoate + octadecanoate + H(+). It catalyses the reaction 13-octadecanoyloxy-octadecanoate + H2O = 13-hydroxy-octadecanoate + octadecanoate + H(+). The catalysed reaction is 5-(9Z-hexadecenoyloxy)-octadecanoate + H2O = 5-hydroxy-octadecanoate + (9Z)-hexadecenoate + H(+). It carries out the reaction 9-octadecanoyloxy-octadecanoate + H2O = 9-hydroxy-octadecanoate + octadecanoate + H(+). Its activity is regulated as follows. Activated by bile salts such as sodium taurocholate. Functionally, catalyzes the hydrolysis of a wide range of substrates including cholesteryl esters, phospholipids, lysophospholipids, di- and tri-acylglycerols, and fatty acid esters of hydroxy fatty acids (FAHFAs). Preferentially hydrolyzes FAHFAs with the ester bond further away from the carboxylate. Unsaturated FAHFAs are hydrolyzed more quickly than saturated FAHFAs. Has an essential role in the complete digestion of dietary lipids and their intestinal absorption, along with the absorption of fat-soluble vitamins. This is Bile salt-activated lipase (Cel) from Mus musculus (Mouse).